The primary structure comprises 212 residues: Thymidylate kinase (212 aa).

15 to 22 (GIDGAGKS) serves as a coordination point for ATP.

Belongs to the thymidylate kinase family.

It catalyses the reaction dTMP + ATP = dTDP + ADP. In terms of biological role, phosphorylation of dTMP to form dTDP in both de novo and salvage pathways of dTTP synthesis. The sequence is that of Thymidylate kinase from Chromobacterium violaceum (strain ATCC 12472 / DSM 30191 / JCM 1249 / CCUG 213 / NBRC 12614 / NCIMB 9131 / NCTC 9757 / MK).